Consider the following 416-residue polypeptide: Hemagglutinin-esterase (416 aa).

The signal sequence occupies residues 1–14 (MLSLILFFPSFAFA). An esterase domain first part region spans residues 4-121 (LILFFPSFAF…GVDSYMELKT (118 aa)). Over 15–393 (VTPVTPYFGP…ESVDVISSSY (379 aa)) the chain is Virion surface. The active-site Nucleophile is Ser37. Residues Cys41 and Cys57 are joined by a disulfide bond. Asn59 and Asn76 each carry an N-linked (GlcNAc...) asparagine; by host glycan. 5 disulfide bridges follow: Cys88–Cys136, Cys108–Cys156, Cys192–Cys273, Cys200–Cys246, and Cys206–Cys213. The tract at residues 122–263 (SFNIKLNQMA…GTHNASIVGN (142 aa)) is receptor binding. N-linked (GlcNAc...) asparagine; by host glycosylation is found at Asn257, Asn278, and Asn294. The esterase domain second part stretch occupies residues 264–379 (FLFYPTKSYC…SCPQYVKLFD (116 aa)). Cys304 and Cys309 are disulfide-bonded. N-linked (GlcNAc...) asparagine; by host glycosylation is present at Asn322. Residue His328 is the Charge relay system of the active site. The N-linked (GlcNAc...) asparagine; by host glycan is linked to Asn343. A disulfide bridge links Cys346 with Cys371. The helical transmembrane segment at 394 to 414 (FVATWVLLVVVVILIFVIISF) threads the bilayer. The Intravirion segment spans residues 415 to 416 (FC).

Belongs to the influenza type C/coronaviruses hemagglutinin-esterase family. In terms of assembly, homodimer. N-glycosylated.

The protein resides in the virion membrane. The protein localises to the host cell membrane. It carries out the reaction N-acetyl-9-O-acetylneuraminate + H2O = N-acetylneuraminate + acetate + H(+). The catalysed reaction is N-acetyl-4-O-acetylneuraminate + H2O = N-acetylneuraminate + acetate + H(+). Functionally, structural protein that makes short spikes at the surface of the virus. Contains receptor binding and receptor-destroying activities. Mediates de-O-acetylation of N-acetyl-9-O-acetylneuraminic acid, which is probably the receptor determinant recognized by the virus on the surface of erythrocytes and susceptible cells. This receptor-destroying activity is important for virus release as it probably helps preventing self-aggregation and ensures the efficient spread of the progeny virus from cell to cell. May serve as a secondary viral attachment protein for initiating infection, the spike protein being the major one. Seems to be a 'luxury' protein that is not absolutely necessary for virus infection in culture. However, its presence in the virus may alter its pathogenicity. May become a target for both the humoral and the cellular branches of the immune system. The polypeptide is Hemagglutinin-esterase (HE) (Homo sapiens (Human)).